A 334-amino-acid polypeptide reads, in one-letter code: Holliday junction branch migration complex subunit RuvB (334 aa).

The large ATPase domain (RuvB-L) stretch occupies residues 4–184 (EDRLISGTQK…FGIVQRLEYY (181 aa)). Residues Ile-23, Arg-24, Gly-65, Lys-68, Thr-69, Thr-70, 131 to 133 (EDY), Arg-174, Tyr-184, and Arg-221 each bind ATP. Thr-69 is a binding site for Mg(2+). The tract at residues 185 to 255 (DLKSLTRIVL…VAKLALDMLE (71 aa)) is small ATPAse domain (RuvB-S). A head domain (RuvB-H) region spans residues 258–334 (NEGFDYMDRK…YLHFGFDKPQ (77 aa)). DNA-binding residues include Arg-313 and Arg-318.

The protein belongs to the RuvB family. As to quaternary structure, homohexamer. Forms an RuvA(8)-RuvB(12)-Holliday junction (HJ) complex. HJ DNA is sandwiched between 2 RuvA tetramers; dsDNA enters through RuvA and exits via RuvB. An RuvB hexamer assembles on each DNA strand where it exits the tetramer. Each RuvB hexamer is contacted by two RuvA subunits (via domain III) on 2 adjacent RuvB subunits; this complex drives branch migration. In the full resolvosome a probable DNA-RuvA(4)-RuvB(12)-RuvC(2) complex forms which resolves the HJ.

It is found in the cytoplasm. It carries out the reaction ATP + H2O = ADP + phosphate + H(+). Functionally, the RuvA-RuvB-RuvC complex processes Holliday junction (HJ) DNA during genetic recombination and DNA repair, while the RuvA-RuvB complex plays an important role in the rescue of blocked DNA replication forks via replication fork reversal (RFR). RuvA specifically binds to HJ cruciform DNA, conferring on it an open structure. The RuvB hexamer acts as an ATP-dependent pump, pulling dsDNA into and through the RuvAB complex. RuvB forms 2 homohexamers on either side of HJ DNA bound by 1 or 2 RuvA tetramers; 4 subunits per hexamer contact DNA at a time. Coordinated motions by a converter formed by DNA-disengaged RuvB subunits stimulates ATP hydrolysis and nucleotide exchange. Immobilization of the converter enables RuvB to convert the ATP-contained energy into a lever motion, pulling 2 nucleotides of DNA out of the RuvA tetramer per ATP hydrolyzed, thus driving DNA branch migration. The RuvB motors rotate together with the DNA substrate, which together with the progressing nucleotide cycle form the mechanistic basis for DNA recombination by continuous HJ branch migration. Branch migration allows RuvC to scan DNA until it finds its consensus sequence, where it cleaves and resolves cruciform DNA. This is Holliday junction branch migration complex subunit RuvB from Psychromonas ingrahamii (strain DSM 17664 / CCUG 51855 / 37).